The primary structure comprises 344 residues: Endo-1,4-beta-xylanase UM03411 (344 aa).

The N-terminal stretch at 1 to 21 is a signal peptide; sequence MKTNFLVLLSALLAASSAVTA. In terms of domain architecture, GH10 spans 35–338; sequence QRAGSSLNAA…KPAYNAVLST (304 aa). The active-site Proton donor is the glutamate 166. Asparagine 171 carries an N-linked (GlcNAc...) asparagine glycan. The active-site Nucleophile is the glutamate 275. Cysteine 293 and cysteine 299 form a disulfide bridge. Asparagine 310 and asparagine 323 each carry an N-linked (GlcNAc...) asparagine glycan.

It belongs to the glycosyl hydrolase 10 (cellulase F) family.

The protein resides in the secreted. It carries out the reaction Endohydrolysis of (1-&gt;4)-beta-D-xylosidic linkages in xylans.. It participates in glycan degradation; xylan degradation. Endo-1,4-beta-xylanase involved in the hydrolysis of xylan, a major structural heterogeneous polysaccharide found in plant biomass representing the second most abundant polysaccharide in the biosphere, after cellulose. This is Endo-1,4-beta-xylanase UM03411 from Mycosarcoma maydis (Corn smut fungus).